The sequence spans 178 residues: Peptide deformylase (178 aa).

Positions 96 and 138 each coordinate Fe cation. E139 is a catalytic residue. Residue H142 coordinates Fe cation.

The protein belongs to the polypeptide deformylase family. Requires Fe(2+) as cofactor.

The enzyme catalyses N-terminal N-formyl-L-methionyl-[peptide] + H2O = N-terminal L-methionyl-[peptide] + formate. Functionally, removes the formyl group from the N-terminal Met of newly synthesized proteins. Requires at least a dipeptide for an efficient rate of reaction. N-terminal L-methionine is a prerequisite for activity but the enzyme has broad specificity at other positions. This Bartonella tribocorum (strain CIP 105476 / IBS 506) protein is Peptide deformylase.